A 246-amino-acid polypeptide reads, in one-letter code: Bis(5'-nucleosyl)-tetraphosphatase PrpE [asymmetrical] (246 aa).

It belongs to the PrpE family. It depends on Ni(2+) as a cofactor.

It catalyses the reaction P(1),P(4)-bis(5'-guanosyl) tetraphosphate + H2O = GMP + GTP + 2 H(+). Functionally, asymmetrically hydrolyzes Ap4p to yield AMP and ATP. This is Bis(5'-nucleosyl)-tetraphosphatase PrpE [asymmetrical] from Bacillus thuringiensis (strain Al Hakam).